Here is a 660-residue protein sequence, read N- to C-terminus: DNA ligase (660 aa).

NAD(+)-binding positions include aspartate 33 to aspartate 37, serine 82 to leucine 83, and glutamate 110. Lysine 112 serves as the catalytic N6-AMP-lysine intermediate. The NAD(+) site is built by arginine 133, glutamate 167, lysine 281, and lysine 305. Zn(2+)-binding residues include cysteine 396, cysteine 399, cysteine 412, and cysteine 417. Positions glycine 583–aspartate 660 constitute a BRCT domain.

The protein belongs to the NAD-dependent DNA ligase family. LigA subfamily. Mg(2+) serves as cofactor. It depends on Mn(2+) as a cofactor.

It catalyses the reaction NAD(+) + (deoxyribonucleotide)n-3'-hydroxyl + 5'-phospho-(deoxyribonucleotide)m = (deoxyribonucleotide)n+m + AMP + beta-nicotinamide D-nucleotide.. In terms of biological role, DNA ligase that catalyzes the formation of phosphodiester linkages between 5'-phosphoryl and 3'-hydroxyl groups in double-stranded DNA using NAD as a coenzyme and as the energy source for the reaction. It is essential for DNA replication and repair of damaged DNA. This chain is DNA ligase, found in Borreliella burgdorferi (strain ZS7) (Borrelia burgdorferi).